Here is a 360-residue protein sequence, read N- to C-terminus: DNA integrity scanning protein DisA (360 aa).

Residues 11-149 (ELDLSSILQF…ENMKYTLKDI (139 aa)) enclose the DAC domain. ATP contacts are provided by residues G78, L96, and 109–113 (MRHRT).

This sequence belongs to the DisA family. Homooligomer. Interacts with RadA. The cofactor is Mg(2+).

Its subcellular location is the cytoplasm. The enzyme catalyses 2 ATP = 3',3'-c-di-AMP + 2 diphosphate. Diadenylate cyclase (DAC) activity is inhibited 2-fold by Holliday junction (HJ) DNA, further addition of RecG inhibits DAC activity 11-fold; RecG may relocate DisA from the HJ. DAC is inhibited by the interaction with RadA. Diadenylate cyclase activity is not affected by ssDNA or dsDNA, but three- and four-way junctions strongly inhibit the activity of DisA, suggesting the enzyme is regulated by branched nucleic acids. In terms of biological role, participates in a DNA-damage check-point that is active prior to asymmetric division when DNA is damaged. Forms globular foci that rapidly scan along the chromosomes during sporulation, searching for lesions. Its ability to scan through the chromosome rapidly is due to its non-specific DNA-binding. When a lesion is present, DisA pauses at the lesion site. This triggers a cellular response that culminates in a temporary block in sporulation initiation. It is required, at least partially, to inhibit the activity of the transcription factor spo0A, which controls, among others, early sporulation genes. In B.subtilis c-di-AMP is a second messenger that mediates growth, DNA repair and cell wall homeostasis; it is toxic when present in excess. Limits the replication fork reggression activity of RecG; DisA inhibits the ATPase activity of RecG. By limiting RecG-mediated fork regression, DisA provides time for removal of potentially lethal DNA lesions. Functionally, one of 3 paralogous diadenylate cyclases (DAC) in this bacteria. Has diadenylate cyclase activity, catalyzing the condensation of 2 ATP molecules into cyclic di-AMP (c-di-AMP). c-di-AMP acts as a signaling molecule that couples DNA integrity with progression of sporulation. The rise in c-di-AMP level generated by DisA while scanning the chromosome operates as a positive signal that advances sporulation; upon encountering a lesion, the DisA focus arrests at the damaged site and halts c-di-AMP synthesis. Does not convert GTP to c-di-GMP. The protein is DNA integrity scanning protein DisA of Bacillus subtilis (strain 168).